A 319-amino-acid chain; its full sequence is tRNA uridine(34) hydroxylase (319 aa).

Residues 124–218 (LDEDTVILDA…YGKNEETKGE (95 aa)) enclose the Rhodanese domain. Cysteine 178 functions as the Cysteine persulfide intermediate in the catalytic mechanism.

It belongs to the TrhO family.

It catalyses the reaction uridine(34) in tRNA + AH2 + O2 = 5-hydroxyuridine(34) in tRNA + A + H2O. In terms of biological role, catalyzes oxygen-dependent 5-hydroxyuridine (ho5U) modification at position 34 in tRNAs. The protein is tRNA uridine(34) hydroxylase of Listeria monocytogenes serovar 1/2a (strain ATCC BAA-679 / EGD-e).